A 227-amino-acid polypeptide reads, in one-letter code: 2,3-bisphosphoglycerate-dependent phosphoglycerate mutase (227 aa).

Substrate-binding positions include Arg7–Asn14, Thr20–Gly21, Arg59, Glu86–Tyr89, Lys97, Arg113–Arg114, and Gly182–Asn183. Catalysis depends on His8, which acts as the Tele-phosphohistidine intermediate. Glu86 (proton donor/acceptor) is an active-site residue.

It belongs to the phosphoglycerate mutase family. BPG-dependent PGAM subfamily. As to quaternary structure, homodimer.

It catalyses the reaction (2R)-2-phosphoglycerate = (2R)-3-phosphoglycerate. It functions in the pathway carbohydrate degradation; glycolysis; pyruvate from D-glyceraldehyde 3-phosphate: step 3/5. Functionally, catalyzes the interconversion of 2-phosphoglycerate and 3-phosphoglycerate. The sequence is that of 2,3-bisphosphoglycerate-dependent phosphoglycerate mutase from Pasteurella multocida (strain Pm70).